A 520-amino-acid chain; its full sequence is Cytochrome P450 4F8 (520 aa).

The chain crosses the membrane as a helical span at residues 15–37; it reads AASPWLLLLVVGASWLLARILAW. Residue Cys468 coordinates heme.

Belongs to the cytochrome P450 family. It depends on heme as a cofactor. In terms of tissue distribution, expressed in the epithelium of seminal vesicles, in renal cortex, in adult and fetal liver, in epidermis, in corneal epithelium, in sweat glands, hair follicles, epithelial linings of the ampulla of vas deferens and of the stomach and small intestine, as well as in the transitional epithelium of the bladder and ureter (at protein level). In the epidermis, expressed from the basal cell to the granular cell layers. In the corneal epithelium, expressed in all cell layers. Also detected in prostate. Up-regulated in the epidermis of psoriatic lesions.

It is found in the endoplasmic reticulum membrane. The protein resides in the microsome membrane. It catalyses the reaction an organic molecule + reduced [NADPH--hemoprotein reductase] + O2 = an alcohol + oxidized [NADPH--hemoprotein reductase] + H2O + H(+). The enzyme catalyses (5Z,8Z,11Z,14Z)-eicosatetraenoate + reduced [NADPH--hemoprotein reductase] + O2 = (18R)-hydroxy-(5Z,8Z,11Z,14Z)-eicosatetraenoate + oxidized [NADPH--hemoprotein reductase] + H2O + H(+). The catalysed reaction is (4Z,7Z,10Z,13Z,16Z)-docosapentaenoate + reduced [NADPH--hemoprotein reductase] + O2 = 20-hydroxy-(4Z,7Z,10Z,13Z,16Z)-docosapentaenoate + oxidized [NADPH--hemoprotein reductase] + H2O + H(+). It carries out the reaction prostaglandin H1 + reduced [NADPH--hemoprotein reductase] + O2 = 19-hydroxyprostaglandin H1 + oxidized [NADPH--hemoprotein reductase] + H2O + H(+). It catalyses the reaction prostaglandin H2 + reduced [NADPH--hemoprotein reductase] + O2 = 19-hydroxyprostaglandin H2 + oxidized [NADPH--hemoprotein reductase] + H2O + H(+). The enzyme catalyses prostaglandin I2 + reduced [NADPH--hemoprotein reductase] + O2 = 19-hydroxy-prostaglandin I2 + oxidized [NADPH--hemoprotein reductase] + H2O + H(+). The catalysed reaction is (4Z,7Z,10Z,13Z,16Z,19Z)-docosahexaenoate + reduced [NADPH--hemoprotein reductase] + O2 = 10,11-epoxy-(4Z,7Z,13Z,16Z,19Z)-docosapentaenoate + oxidized [NADPH--hemoprotein reductase] + H2O + H(+). It carries out the reaction (4Z,7Z,10Z,13Z,16Z,19Z)-docosahexaenoate + reduced [NADPH--hemoprotein reductase] + O2 = 13,14-epoxy-(4Z,7Z,10Z,16Z,19Z)-docosapentaenoate + oxidized [NADPH--hemoprotein reductase] + H2O + H(+). It catalyses the reaction (4Z,7Z,10Z,13Z,16Z,19Z)-docosahexaenoate + reduced [NADPH--hemoprotein reductase] + O2 = 16,17-epoxy-(4Z,7Z,10Z,13Z,19Z)-docosapentaenoate + oxidized [NADPH--hemoprotein reductase] + H2O + H(+). The enzyme catalyses (4Z,7Z,10Z,13Z,16Z,19Z)-docosahexaenoate + reduced [NADPH--hemoprotein reductase] + O2 = 19,20-epoxy-(4Z,7Z,10Z,13Z,16Z)-docosapentaenoate + oxidized [NADPH--hemoprotein reductase] + H2O + H(+). The catalysed reaction is (7Z,10Z,13Z,16Z,19Z)-docosapentaenoate + reduced [NADPH--hemoprotein reductase] + O2 = 10,11-epoxy-(7Z,13Z,16Z,19Z)-docosatetraenoate + oxidized [NADPH--hemoprotein reductase] + H2O + H(+). It carries out the reaction (7Z,10Z,13Z,16Z,19Z)-docosapentaenoate + reduced [NADPH--hemoprotein reductase] + O2 = 13,14-epoxy-(7Z,10Z,16Z,19Z)-docosatetraenoate + oxidized [NADPH--hemoprotein reductase] + H2O + H(+). It catalyses the reaction (7Z,10Z,13Z,16Z,19Z)-docosapentaenoate + reduced [NADPH--hemoprotein reductase] + O2 = 16,17-epoxy-(7Z,10Z,13Z,19Z)-docosatetraenoate + oxidized [NADPH--hemoprotein reductase] + H2O + H(+). The enzyme catalyses (7Z,10Z,13Z,16Z,19Z)-docosapentaenoate + reduced [NADPH--hemoprotein reductase] + O2 = 19,20-epoxy-(7Z,10Z,13Z,16Z)-docosatetraenoate + oxidized [NADPH--hemoprotein reductase] + H2O + H(+). The protein operates within lipid metabolism; fatty acid metabolism. Its function is as follows. A cytochrome P450 monooxygenase involved in the metabolism of endogenous polyunsaturated fatty acids (PUFAs) and their oxygenated derivatives (oxylipins). Mechanistically, uses molecular oxygen inserting one oxygen atom into a substrate, and reducing the second into a water molecule, with two electrons provided by NADPH via cytochrome P450 reductase (CPR; NADPH-ferrihemoprotein reductase). Catalyzes the hydroxylation of carbon hydrogen bonds, with preference for omega-1 and omega-2 positions. Hydroxylates (5Z,8Z,11Z,14Z)-eicosatetraenoic acid (arachidonate) predominantly at omega-2 position to form (18R)-hydroxyeicosatetraenoic acid (18R-HETE). Exhibits omega-1 hydroxylase activity toward prostaglandin (PG) H1, PGH2 and PGI2. Catalyzes the epoxidation of double bonds of PUFAs, including docosahexaenoic and docosapentaenoic acids. Shows little activity against PGD2, PGE1, PGE2, PGF2alpha, and leukotriene B4. This Homo sapiens (Human) protein is Cytochrome P450 4F8.